Consider the following 213-residue polypeptide: MEQYKRDFIEFALSRNVLKFGEFTLKSGRKSPYFFNAGLFNTGADLARLGEFYAAAIQASAVDFDVVFGPAYKGIPIGTSVSVALFNRYGIDKPVCFNRKEVKDHGEGGNLIGSPLQGKILLVDDVITAGTAIRESMELISANQAELAAVLIALNRKERGKGELSAIQEVERDYQCQVLSIIDLDDLMQFIEQDPRYSSHLPEMRAYRAEFGV.

Position 26 (Lys-26) interacts with 5-phospho-alpha-D-ribose 1-diphosphate. 34-35 (FF) is a binding site for orotate. 5-phospho-alpha-D-ribose 1-diphosphate contacts are provided by residues 72–73 (YK), Arg-99, Lys-100, Lys-103, His-105, and 124–132 (DDVITAGTA). Residues Thr-128 and Arg-156 each coordinate orotate.

Belongs to the purine/pyrimidine phosphoribosyltransferase family. PyrE subfamily. Homodimer. It depends on Mg(2+) as a cofactor.

The enzyme catalyses orotidine 5'-phosphate + diphosphate = orotate + 5-phospho-alpha-D-ribose 1-diphosphate. It functions in the pathway pyrimidine metabolism; UMP biosynthesis via de novo pathway; UMP from orotate: step 1/2. Functionally, catalyzes the transfer of a ribosyl phosphate group from 5-phosphoribose 1-diphosphate to orotate, leading to the formation of orotidine monophosphate (OMP). The protein is Orotate phosphoribosyltransferase of Haemophilus influenzae (strain ATCC 51907 / DSM 11121 / KW20 / Rd).